Consider the following 504-residue polypeptide: Glucosaminyl-phosphatidylinositol-acyltransferase PIGW (504 aa).

The Lumenal segment spans residues 1–21; that stretch reads MSEKQMKEAFVSNLNGTTVLE. A glycan (N-linked (GlcNAc...) asparagine) is linked at asparagine 15. The helical transmembrane segment at 22 to 42 threads the bilayer; that stretch reads ITQGLCFPAFCILCRGFLIIF. At 43-56 the chain is on the cytoplasmic side; it reads SQYLCSFSPTWKTR. Residues 57 to 75 form a helical membrane-spanning segment; that stretch reads FLTDFVVLIVPMVATLTIW. The Lumenal segment spans residues 76-81; that stretch reads ASFILL. A helical membrane pass occupies residues 82–98; it reads ELLGVIIFGAGLLYQIY. The Cytoplasmic portion of the chain corresponds to 99-131; it reads RRRTCYARLPFLKILEKFLNISLESEYNPAISC. A helical transmembrane segment spans residues 132-152; it reads FRVITSAFTAIAILAVDFPLF. Topologically, residues 153–162 are lumenal; it reads PRRFAKTELY. Residues 163–183 form a helical membrane-spanning segment; it reads GTGAMDFGVGGFVFGSAMVCL. The Cytoplasmic segment spans residues 184 to 202; the sequence is EVRRRKYMEGSKLHYFTNS. The helical transmembrane segment at 203-223 threads the bilayer; sequence LYSVWPLVFLGIGRLAIIKSI. The Lumenal portion of the chain corresponds to 224–237; it reads GYQEHLTEYGVHWN. Residues 238–258 form a helical membrane-spanning segment; that stretch reads FFFTIIVVKLITPLLLIIFPL. Residues 259-260 lie on the Cytoplasmic side of the membrane; sequence NK. Residues 261–281 traverse the membrane as a helical segment; the sequence is SWIIALGITVLYQLALDFTSL. The Lumenal portion of the chain corresponds to 282 to 305; it reads KRLILYGTDGSGTRVGLLNANREG. A helical membrane pass occupies residues 306–326; it reads IISTLGYVAIHMAGVQTGLYM. Over 327–338 the chain is Cytoplasmic; it reads HKNRSHIKDLIK. A helical transmembrane segment spans residues 339–359; it reads VACFLLLAAISLFISLYVVQV. The Lumenal portion of the chain corresponds to 360 to 370; it reads NVEAVSRRMAN. Residues 371-391 form a helical membrane-spanning segment; that stretch reads LAFCIWIVASSLILLSSLLLG. Residues 392-448 are Cytoplasmic-facing; that stretch reads DIILSFAKFLIKGALVPCSWKLIQSPVTNKKHSESLVPEAERMEPSLCLITALNRKQ. Serine 416 carries the post-translational modification Phosphoserine. A helical transmembrane segment spans residues 449–469; sequence LIFFLLSNITTGLINLMVDTL. Residues 470–473 lie on the Lumenal side of the membrane; sequence HSST. A helical membrane pass occupies residues 474 to 494; that stretch reads LWALFVVNLYMFSNCLIVYVL. Over 495–504 the chain is Cytoplasmic; sequence YLQDKTVQFW.

Belongs to the PIGW family.

It is found in the endoplasmic reticulum membrane. The protein operates within glycolipid biosynthesis; glycosylphosphatidylinositol-anchor biosynthesis. In terms of biological role, acyltransferase that catalyzes the acyl transfer from an acyl-CoA at the 2-OH position of the inositol ring of glucosaminyl phosphatidylinositol (GlcN-PI) to generate glucosaminyl acyl phosphatidylinositol (GlcN-(acyl)PI) and participates in the fourth step of GPI-anchor biosynthesis. Required for the transport of GPI-anchored proteins to the plasma membrane. Acetylation during GPI-anchor biosynthesis is not essential for the subsequent mannosylation and is usually removed soon after the attachment of GPIs to proteins. This Homo sapiens (Human) protein is Glucosaminyl-phosphatidylinositol-acyltransferase PIGW.